The chain runs to 335 residues: MGQHGAIRLQNEVQEGMPPPHELTEEEQWAEEHRKMHEKHKGHEAMHMEMMVIFMISVIVGQIFLVTWKRKHFKSYQMCTLIGMLTIPVYVCFNRSWYRFLATWLVFCIFSAFIWLKASAQHISGGTPRFVYKWFLFLHKLSYVLGVVGYLIMMGALLGFHVLFGVSQPTLMDAGILFMFYGVYYGVLGRDFAHICTARMASRIGYYTPEGLPKKHLEDGVCAVCGGRLDDSEHVHDADAVVTTKMVEDEDEKLYKLSCGHVFHEFCIRGWVVVGKLQTCPYCKERVDLQRMFKNPWEKPHLFYGKLLDWIRYLVCWQPLIVTAVQGLTTWMGLE.

Residues 1 to 47 lie on the Cytoplasmic side of the membrane; that stretch reads MGQHGAIRLQNEVQEGMPPPHELTEEEQWAEEHRKMHEKHKGHEAMH. A helical membrane pass occupies residues 48 to 68; it reads MEMMVIFMISVIVGQIFLVTW. The Lumenal portion of the chain corresponds to 69–72; sequence KRKH. The helical transmembrane segment at 73–93 threads the bilayer; the sequence is FKSYQMCTLIGMLTIPVYVCF. Over 94-99 the chain is Cytoplasmic; sequence NRSWYR. A helical membrane pass occupies residues 100-120; the sequence is FLATWLVFCIFSAFIWLKASA. The Lumenal segment spans residues 121 to 143; it reads QHISGGTPRFVYKWFLFLHKLSY. Residues 144–164 traverse the membrane as a helical segment; sequence VLGVVGYLIMMGALLGFHVLF. Residues 165–168 lie on the Cytoplasmic side of the membrane; it reads GVSQ. The chain crosses the membrane as a helical span at residues 169-189; that stretch reads PTLMDAGILFMFYGVYYGVLG. Residues 190–335 are Lumenal-facing; it reads RDFAHICTAR…QGLTTWMGLE (146 aa). An RING-type; atypical zinc finger spans residues 222–284; the sequence is CAVCGGRLDD…GKLQTCPYCK (63 aa).

It belongs to the RNF121 family. In terms of tissue distribution, expressed in body wall muscles, the hypodermis, seam cells, vulval cells, spermathecal cells, uterine cells and the distal tip cell (at protein level).

It localises to the endoplasmic reticulum membrane. The protein resides in the golgi apparatus membrane. The enzyme catalyses S-ubiquitinyl-[E2 ubiquitin-conjugating enzyme]-L-cysteine + [acceptor protein]-L-lysine = [E2 ubiquitin-conjugating enzyme]-L-cysteine + N(6)-ubiquitinyl-[acceptor protein]-L-lysine.. It participates in protein modification; protein ubiquitination. E3 ubiquitin ligase which accepts ubiquitin and transfers it to substrates such as the beta-integrin subunit pat-3, promoting their degradation by the endoplasmic reticulum-associated degradation (ERAD) pathway which is a pathway involved in ubiquitin-dependent degradation of misfolded endoplasmic reticulum proteins. Negatively regulates the unfolded protein response to reduce endoplasmic reticulum stress. Required for the cessation of distal tip cell migration at the end of larval morphogenesis. Plays a role in germline and gonad development. The chain is E3 ubiquitin ligase rnf-121 from Caenorhabditis elegans.